We begin with the raw amino-acid sequence, 93 residues long: UPF0223 protein LACR_0546 (93 aa).

Belongs to the UPF0223 family.

This Lactococcus lactis subsp. cremoris (strain SK11) protein is UPF0223 protein LACR_0546.